The following is a 714-amino-acid chain: Polyribonucleotide nucleotidyltransferase (714 aa).

Aspartate 484 and aspartate 490 together coordinate Mg(2+). In terms of domain architecture, KH spans 551 to 610 (PRIMVINIAPEKVREVIGPGGKVINKIIDETGVKIDTEDDGKITVAGENTESAQRAIDMI). Residues 620–688 (GEKYLGRVTK…DQGKMTLSRK (69 aa)) enclose the S1 motif domain. The segment at 685 to 714 (LSRKALLPKPERKEKKNFDKKSEDQNSEDK) is disordered. The segment covering 693-714 (KPERKEKKNFDKKSEDQNSEDK) has biased composition (basic and acidic residues).

It belongs to the polyribonucleotide nucleotidyltransferase family. Mg(2+) is required as a cofactor.

The protein localises to the cytoplasm. It catalyses the reaction RNA(n+1) + phosphate = RNA(n) + a ribonucleoside 5'-diphosphate. Involved in mRNA degradation. Catalyzes the phosphorolysis of single-stranded polyribonucleotides processively in the 3'- to 5'-direction. The chain is Polyribonucleotide nucleotidyltransferase from Finegoldia magna (strain ATCC 29328 / DSM 20472 / WAL 2508) (Peptostreptococcus magnus).